Consider the following 732-residue polypeptide: Beta-galactosidase 5 (732 aa).

The N-terminal stretch at 1 to 23 (MGTTILVLSKILTFLLTTMLIGS) is a signal peptide. The active-site Proton donor is the Glu-187. Glu-256 (nucleophile) is an active-site residue. Asn-466 carries N-linked (GlcNAc...) asparagine glycosylation.

Belongs to the glycosyl hydrolase 35 family. As to expression, expressed in leaves and flowers.

Its subcellular location is the secreted. The protein localises to the extracellular space. It is found in the apoplast. It catalyses the reaction Hydrolysis of terminal non-reducing beta-D-galactose residues in beta-D-galactosides.. The sequence is that of Beta-galactosidase 5 (BGAL5) from Arabidopsis thaliana (Mouse-ear cress).